The chain runs to 308 residues: MSTKMEQPFYHDDSFLVGYGHNDAALHDYKLQKQSMNLNLTEPYRNLKSDLYHTSGADSGSLKLASPELERLIIQTSNGVLTTPTPGQYLYSRGITDEQEGFAEGFVKALDDLHKMFQMPPPNVSIGAGGVTTCSTTASVFGSSLQSEPPIYTLNAYCPAPSHPSTTISYLPPHVQQSQHPENTHGFQHSGVLPQRYVPLKEEPQTVPDMHSSDCSPPTSPIDMENQERIKAERKRLRNRLAATKCRKRKLERISRLEEKVKVLKNDNAGLSNTASVLRDQVAQLKQKVLRHMNSGCQLMLTSKMEAF.

The segment at 229-256 is basic motif; that stretch reads RIKAERKRLRNRLAATKCRKRKLERISR. A bZIP domain is found at 229–292; that stretch reads RIKAERKRLR…AQLKQKVLRH (64 aa). The leucine-zipper stretch occupies residues 257–285; sequence LEEKVKVLKNDNAGLSNTASVLRDQVAQL.

The protein belongs to the bZIP family. Jun subfamily. In terms of assembly, binds DNA as a homodimer or as a heterodimer with another member of the jun/fos family.

It is found in the nucleus. In terms of biological role, transcription factor involved in regulating gene activity following the primary growth factor response. Binds to the DNA sequence 5'-TGA[CG]TCA-3'. The sequence is that of Transcription factor JunB (junb) from Cyprinus carpio (Common carp).